A 231-amino-acid polypeptide reads, in one-letter code: Uracil-DNA glycosylase (231 aa).

Aspartate 74 acts as the Proton acceptor in catalysis.

It belongs to the uracil-DNA glycosylase (UDG) superfamily. UNG family.

It is found in the cytoplasm. The catalysed reaction is Hydrolyzes single-stranded DNA or mismatched double-stranded DNA and polynucleotides, releasing free uracil.. Functionally, excises uracil residues from the DNA which can arise as a result of misincorporation of dUMP residues by DNA polymerase or due to deamination of cytosine. The sequence is that of Uracil-DNA glycosylase from Campylobacter jejuni subsp. jejuni serotype O:6 (strain 81116 / NCTC 11828).